A 236-amino-acid chain; its full sequence is MRRFDIGWKTYLLPEIHPEGWRFISIFAAVTFGLWLWQDWLVVPGLVLTIWCVYFFRNPKRTVPDRLGLVVTPASGIVQMVGLVDPPAELALDPPGPRQRISVFMSVFDCHVNRCPVGGTVRKIVYAPGKFVNATLDKASADNERNSVVLDIGQSRDLAFVQIAGLVARRIRCDLVEGQSVLTGEIMGLIRFGSRLDIYLPPGAAPLVAPGQSCISGETVLADLASAEPERLGVLR.

Ser194 functions as the Schiff-base intermediate with substrate; via pyruvic acid in the catalytic mechanism. Ser194 carries the pyruvic acid (Ser); by autocatalysis modification.

This sequence belongs to the phosphatidylserine decarboxylase family. PSD-A subfamily. In terms of assembly, heterodimer of a large membrane-associated beta subunit and a small pyruvoyl-containing alpha subunit. The cofactor is pyruvate. Is synthesized initially as an inactive proenzyme. Formation of the active enzyme involves a self-maturation process in which the active site pyruvoyl group is generated from an internal serine residue via an autocatalytic post-translational modification. Two non-identical subunits are generated from the proenzyme in this reaction, and the pyruvate is formed at the N-terminus of the alpha chain, which is derived from the carboxyl end of the proenzyme. The post-translation cleavage follows an unusual pathway, termed non-hydrolytic serinolysis, in which the side chain hydroxyl group of the serine supplies its oxygen atom to form the C-terminus of the beta chain, while the remainder of the serine residue undergoes an oxidative deamination to produce ammonia and the pyruvoyl prosthetic group on the alpha chain.

The protein resides in the cell membrane. It carries out the reaction a 1,2-diacyl-sn-glycero-3-phospho-L-serine + H(+) = a 1,2-diacyl-sn-glycero-3-phosphoethanolamine + CO2. It functions in the pathway phospholipid metabolism; phosphatidylethanolamine biosynthesis; phosphatidylethanolamine from CDP-diacylglycerol: step 2/2. Catalyzes the formation of phosphatidylethanolamine (PtdEtn) from phosphatidylserine (PtdSer). The sequence is that of Phosphatidylserine decarboxylase proenzyme from Rhodospirillum rubrum (strain ATCC 11170 / ATH 1.1.1 / DSM 467 / LMG 4362 / NCIMB 8255 / S1).